A 280-amino-acid polypeptide reads, in one-letter code: uncharacterized protein (280 aa).

The DUF1279 domain occupies aspartate 96–lysine 208. Residues valine 115–alanine 135 traverse the membrane as a helical segment. Residues valine 207–serine 274 adopt a coiled-coil conformation. The interval serine 245 to aspartate 280 is disordered.

It is found in the membrane. This is an uncharacterized protein from Danio rerio (Zebrafish).